The following is a 260-amino-acid chain: tRNA pseudouridine synthase A (260 aa).

The active-site Nucleophile is the aspartate 51. Tyrosine 109 contributes to the substrate binding site.

Belongs to the tRNA pseudouridine synthase TruA family. As to quaternary structure, homodimer.

The enzyme catalyses uridine(38/39/40) in tRNA = pseudouridine(38/39/40) in tRNA. In terms of biological role, formation of pseudouridine at positions 38, 39 and 40 in the anticodon stem and loop of transfer RNAs. The protein is tRNA pseudouridine synthase A of Albidiferax ferrireducens (strain ATCC BAA-621 / DSM 15236 / T118) (Rhodoferax ferrireducens).